Consider the following 252-residue polypeptide: Enolase-phosphatase E1 (252 aa).

Mg(2+)-binding residues include Asp14 and Glu16. Substrate contacts are provided by residues 143–144 and Lys177; that span reads SS. Asp202 contributes to the Mg(2+) binding site.

This sequence belongs to the HAD-like hydrolase superfamily. MasA/MtnC family. Monomer. It depends on Mg(2+) as a cofactor.

The protein localises to the cytoplasm. It localises to the nucleus. It carries out the reaction 5-methylsulfanyl-2,3-dioxopentyl phosphate + H2O = 1,2-dihydroxy-5-(methylsulfanyl)pent-1-en-3-one + phosphate. Its pathway is amino-acid biosynthesis; L-methionine biosynthesis via salvage pathway; L-methionine from S-methyl-5-thio-alpha-D-ribose 1-phosphate: step 3/6. It participates in amino-acid biosynthesis; L-methionine biosynthesis via salvage pathway; L-methionine from S-methyl-5-thio-alpha-D-ribose 1-phosphate: step 4/6. Functionally, bifunctional enzyme that catalyzes the enolization of 2,3-diketo-5-methylthiopentyl-1-phosphate (DK-MTP-1-P) into the intermediate 2-hydroxy-3-keto-5-methylthiopentenyl-1-phosphate (HK-MTPenyl-1-P), which is then dephosphorylated to form the acireductone 1,2-dihydroxy-3-keto-5-methylthiopentene (DHK-MTPene). The polypeptide is Enolase-phosphatase E1 (Drosophila pseudoobscura pseudoobscura (Fruit fly)).